The primary structure comprises 197 residues: Fucoxanthin-chlorophyll a-c binding protein E, chloroplastic (197 aa).

The N-terminal 31 residues, 1–31 (MKFVVFASLLASAARFAPAQQSARTSVATNM), are a transit peptide targeting the chloroplast. 3 helical membrane-spanning segments follow: residues 73-94 (ISML…PGDI), 114-134 (ISGA…LAVM), and 174-196 (GRAA…SLIP).

It belongs to the fucoxanthin chlorophyll protein family. In terms of assembly, the LHC complex of chromophytic algae is composed of fucoxanthin, chlorophyll A and C bound non-covalently by fucoxanthin chlorophyll proteins (FCPs). The ratio of the pigments in LHC; fucoxanthin: chlorophyll C: chlorophyll A; (0.6-1): (0.1-0.3): (1).

The protein resides in the plastid. It localises to the chloroplast thylakoid membrane. In terms of biological role, the light-harvesting complex (LHC) functions as a light receptor, it captures and delivers excitation energy to photosystems with which it is closely associated. Energy is transferred from the carotenoid and chlorophyll C (or B) to chlorophyll A and the photosynthetic reaction centers where it is used to synthesize ATP and reducing power. The protein is Fucoxanthin-chlorophyll a-c binding protein E, chloroplastic (FCPE) of Phaeodactylum tricornutum (Diatom).